The sequence spans 114 residues: Translation initiation factor 1A (114 aa).

In terms of domain architecture, S1-like spans 19 to 91 (SEFRLPGEGE…EKGDIVHKYE (73 aa)).

It belongs to the eIF-1A family.

In terms of biological role, seems to be required for maximal rate of protein biosynthesis. Enhances ribosome dissociation into subunits and stabilizes the binding of the initiator Met-tRNA(I) to 40 S ribosomal subunits. In Pyrobaculum aerophilum (strain ATCC 51768 / DSM 7523 / JCM 9630 / CIP 104966 / NBRC 100827 / IM2), this protein is Translation initiation factor 1A (eIF1A).